Reading from the N-terminus, the 173-residue chain is NADH-quinone oxidoreductase subunit B (173 aa).

Residues cysteine 52, cysteine 53, cysteine 117, and cysteine 147 each coordinate [4Fe-4S] cluster.

The protein belongs to the complex I 20 kDa subunit family. In terms of assembly, NDH-1 is composed of 14 different subunits. Subunits NuoB, C, D, E, F, and G constitute the peripheral sector of the complex. It depends on [4Fe-4S] cluster as a cofactor.

It is found in the cell inner membrane. The catalysed reaction is a quinone + NADH + 5 H(+)(in) = a quinol + NAD(+) + 4 H(+)(out). In terms of biological role, NDH-1 shuttles electrons from NADH, via FMN and iron-sulfur (Fe-S) centers, to quinones in the respiratory chain. Couples the redox reaction to proton translocation (for every two electrons transferred, four hydrogen ions are translocated across the cytoplasmic membrane), and thus conserves the redox energy in a proton gradient. The chain is NADH-quinone oxidoreductase subunit B from Pelagibacter ubique (strain HTCC1062).